Here is a 168-residue protein sequence, read N- to C-terminus: MTDQLEDQTQGGSTVDRSLPGGCMADSDLPTKGRQRGVRAVELNVAARLENLALLRTLVGAIGTFEDLDFDAVADLRLAVDEVCTRLIRSALPDATLRLVVDPRKDEVVVEASAACDTHDVVAPGSFSWHVLTALADDVQTFHDGRQPDVAGSVFGITLTARRAASSR.

The tract at residues 1 to 31 is disordered; sequence MTDQLEDQTQGGSTVDRSLPGGCMADSDLPT. Residues 7–16 show a composition bias toward polar residues; it reads DQTQGGSTVD. 124-128 lines the ATP pocket; sequence PGSFS.

This sequence belongs to the anti-sigma-factor family. Homodimer.

Its function is as follows. A cognate anti-sigma factor for alternative sigma factor SigF. Alternative sigma factors are held in an inactive form by an anti-sigma factor. Binds ATP and GTP, may hydrolyze both. The chain is Anti-sigma-F factor RsbW (rsbW) from Mycobacterium tuberculosis (strain CDC 1551 / Oshkosh).